Reading from the N-terminus, the 173-residue chain is Cytidylate kinase (173 aa).

7-15 is a binding site for ATP; that stretch reads GLAGTGTST.

Belongs to the cytidylate kinase family. Type 2 subfamily.

It localises to the cytoplasm. It carries out the reaction CMP + ATP = CDP + ADP. The enzyme catalyses dCMP + ATP = dCDP + ADP. The protein is Cytidylate kinase of Methanosphaera stadtmanae (strain ATCC 43021 / DSM 3091 / JCM 11832 / MCB-3).